Reading from the N-terminus, the 85-residue chain is U4-theraphotoxin-Hhn1d (85 aa).

The N-terminal stretch at 1–22 (MKVTLIAILTCAAVLVLHTTAA) is a signal peptide. A propeptide spanning residues 23-48 (EELEAESQLMEVGMPDTELAAVDEER) is cleaved from the precursor. 3 cysteine pairs are disulfide-bonded: Cys52/Cys66, Cys56/Cys77, and Cys71/Cys82.

This sequence belongs to the neurotoxin 12 (Hwtx-2) family. 02 (Hwtx-2) subfamily. Expressed by the venom gland.

It localises to the secreted. In terms of biological role, postsynaptic neurotoxin. This chain is U4-theraphotoxin-Hhn1d, found in Cyriopagopus hainanus (Chinese bird spider).